The primary structure comprises 197 residues: Imidazoleglycerol-phosphate dehydratase (197 aa).

The protein belongs to the imidazoleglycerol-phosphate dehydratase family.

The protein localises to the cytoplasm. The catalysed reaction is D-erythro-1-(imidazol-4-yl)glycerol 3-phosphate = 3-(imidazol-4-yl)-2-oxopropyl phosphate + H2O. It functions in the pathway amino-acid biosynthesis; L-histidine biosynthesis; L-histidine from 5-phospho-alpha-D-ribose 1-diphosphate: step 6/9. This Thermobifida fusca (strain YX) protein is Imidazoleglycerol-phosphate dehydratase.